A 92-amino-acid polypeptide reads, in one-letter code: Probable Fe(2+)-trafficking protein (92 aa).

Belongs to the Fe(2+)-trafficking protein family.

Functionally, could be a mediator in iron transactions between iron acquisition and iron-requiring processes, such as synthesis and/or repair of Fe-S clusters in biosynthetic enzymes. This Shewanella halifaxensis (strain HAW-EB4) protein is Probable Fe(2+)-trafficking protein.